Consider the following 399-residue polypeptide: Putative 8-amino-7-oxononanoate synthase (399 aa).

Substrate is bound at residue R23. Residue 110-111 (GY) coordinates pyridoxal 5'-phosphate. H135 serves as a coordination point for substrate. Pyridoxal 5'-phosphate-binding positions include S183, 208–211 (DEAH), and 239–242 (TLSK). At K242 the chain carries N6-(pyridoxal phosphate)lysine. T364 contacts substrate.

The protein belongs to the class-II pyridoxal-phosphate-dependent aminotransferase family. BioF subfamily. As to quaternary structure, homodimer. It depends on pyridoxal 5'-phosphate as a cofactor.

The catalysed reaction is 6-carboxyhexanoyl-[ACP] + L-alanine + H(+) = (8S)-8-amino-7-oxononanoate + holo-[ACP] + CO2. It functions in the pathway cofactor biosynthesis; biotin biosynthesis. Functionally, catalyzes the decarboxylative condensation of pimeloyl-[acyl-carrier protein] and L-alanine to produce 8-amino-7-oxononanoate (AON), [acyl-carrier protein], and carbon dioxide. This is Putative 8-amino-7-oxononanoate synthase (bioF) from Cyanothece sp. (strain PCC 7425 / ATCC 29141).